A 678-amino-acid polypeptide reads, in one-letter code: Glutamate--cysteine ligase (678 aa).

Belongs to the glutamate--cysteine ligase type 3 family.

It catalyses the reaction L-cysteine + L-glutamate + ATP = gamma-L-glutamyl-L-cysteine + ADP + phosphate + H(+). The protein operates within sulfur metabolism; glutathione biosynthesis; glutathione from L-cysteine and L-glutamate: step 1/2. Its activity is regulated as follows. Feedback inhibition by glutathione. Its function is as follows. Catalyzes the ATP-dependent condensation of cysteine and glutamate to form the dipeptide gamma-glutamylcysteine (gamma-GC), the first and rate-limiting step in the production of glutathione (GSH). The sequence is that of Glutamate--cysteine ligase (GSH1) from Saccharomyces cerevisiae (strain ATCC 204508 / S288c) (Baker's yeast).